A 410-amino-acid polypeptide reads, in one-letter code: DNA primase small subunit (410 aa).

Catalysis depends on residues E43, D106, and D108. Positions 118 to 129 (CCKDATVCPKCW) match the Zinc knuckle motif motif.

It belongs to the eukaryotic-type primase small subunit family. In terms of assembly, heterodimer of a small subunit and a large subunit.

Its function is as follows. DNA primase is the polymerase that synthesizes small RNA primers for the Okazaki fragments made during discontinuous DNA replication. The polypeptide is DNA primase small subunit (pri-1) (Caenorhabditis elegans).